The chain runs to 97 residues: Large ribosomal subunit protein bL27 (97 aa).

A propeptide spanning residues 1-12 is cleaved from the precursor; the sequence is MLNLNLANLQFM. Residues 15–37 are disordered; the sequence is KKGGGSTSNGRDSQAKRLGAKAA.

Belongs to the bacterial ribosomal protein bL27 family. Post-translationally, the N-terminus is cleaved by ribosomal processing cysteine protease Prp.

This chain is Large ribosomal subunit protein bL27, found in Streptococcus suis (strain 98HAH33).